We begin with the raw amino-acid sequence, 312 residues long: Malate dehydrogenase (312 aa).

NAD(+)-binding positions include 7-13 (GAAGGIG) and aspartate 34. Substrate contacts are provided by arginine 81 and arginine 87. Residues asparagine 94 and 117-119 (ITN) each bind NAD(+). Positions 119 and 153 each coordinate substrate. Histidine 177 functions as the Proton acceptor in the catalytic mechanism. Methionine 227 lines the NAD(+) pocket.

Belongs to the LDH/MDH superfamily. MDH type 1 family. As to quaternary structure, homodimer.

It carries out the reaction (S)-malate + NAD(+) = oxaloacetate + NADH + H(+). Catalyzes the reversible oxidation of malate to oxaloacetate. The sequence is that of Malate dehydrogenase from Moritella marina (Vibrio marinus).